Consider the following 51-residue polypeptide: Large ribosomal subunit protein bL33 (51 aa).

The protein belongs to the bacterial ribosomal protein bL33 family.

In Psychrobacter sp. (strain PRwf-1), this protein is Large ribosomal subunit protein bL33.